The primary structure comprises 166 residues: Interferon gamma (166 aa).

An N-terminal signal peptide occupies residues 1 to 23; that stretch reads MKYTSYILAFQLCVVLGSLGCYC. Residue Gln-24 is modified to Pyrrolidone carboxylic acid. Asn-48, Asn-86, and Asn-120 each carry an N-linked (GlcNAc...) asparagine glycan.

This sequence belongs to the type II (or gamma) interferon family. In terms of assembly, homodimer. Interacts with IFNGR1 (via extracellular domain); this interaction promotes IFNGR1 dimerization. As to expression, released primarily from activated T lymphocytes.

It is found in the secreted. Type II interferon produced by immune cells such as T-cells and NK cells that plays crucial roles in antimicrobial, antiviral, and antitumor responses by activating effector immune cells and enhancing antigen presentation. Primarily signals through the JAK-STAT pathway after interaction with its receptor IFNGR1 to affect gene regulation. Upon IFNG binding, IFNGR1 intracellular domain opens out to allow association of downstream signaling components JAK2, JAK1 and STAT1, leading to STAT1 activation, nuclear translocation and transcription of IFNG-regulated genes. Many of the induced genes are transcription factors such as IRF1 that are able to further drive regulation of a next wave of transcription. Plays a role in class I antigen presentation pathway by inducing a replacement of catalytic proteasome subunits with immunoproteasome subunits. In turn, increases the quantity, quality, and repertoire of peptides for class I MHC loading. Increases the efficiency of peptide generation also by inducing the expression of activator PA28 that associates with the proteasome and alters its proteolytic cleavage preference. Up-regulates as well MHC II complexes on the cell surface by promoting expression of several key molecules such as cathepsins B/CTSB, H/CTSH, and L/CTSL. Participates in the regulation of hematopoietic stem cells during development and under homeostatic conditions by affecting their development, quiescence, and differentiation. This is Interferon gamma (IFNG) from Callithrix jacchus (White-tufted-ear marmoset).